A 1676-amino-acid polypeptide reads, in one-letter code: Protein TIC 214 (1676 aa).

The next 6 helical transmembrane spans lie at 24–44, 70–90, 93–113, 130–150, 170–190, and 218–238; these read KIIN…ALAL, LILG…YIAF, PYTL…GNNL, LEIL…TCIF, MVFL…VLMC, and FFLV…IQSL. 2 stretches are compositionally biased toward basic and acidic residues: residues 264–276 and 283–298; these read LKKS…GKST and SHEK…SKLE. Disordered regions lie at residues 264-302, 546-610, 1123-1151, and 1372-1436; these read LKKS…NEDE, LVVF…SYSI, NKQS…NLIL, and QQQN…SEDD. Residues 562-586 show a composition bias toward polar residues; it reads DSGNIQNKSSDKTINPQNNLTNSKT. The segment covering 597-610 has biased composition (basic and acidic residues); the sequence is TTEKEPKDDKSYSI. A compositionally biased stretch (polar residues) spans 1123 to 1138; the sequence is NKQSLQKGNSKGNSNL. Low complexity predominate over residues 1372 to 1390; it reads QQQNQTTTKINTETKNQQK. A coiled-coil region spans residues 1384 to 1436; that stretch reads ETKNQQKNRVENEENKETENQQNAETKNKQKSKTENEENKETENQQNDESEDD. 2 stretches are compositionally biased toward basic and acidic residues: residues 1391–1402 and 1409–1426; these read NRVENEENKETE and TKNK…KETE.

This sequence belongs to the TIC214 family. In terms of assembly, part of the Tic complex.

Its subcellular location is the plastid. The protein localises to the chloroplast inner membrane. In terms of biological role, involved in protein precursor import into chloroplasts. May be part of an intermediate translocation complex acting as a protein-conducting channel at the inner envelope. This Cuscuta obtusiflora (Peruvian dodder) protein is Protein TIC 214.